Here is a 295-residue protein sequence, read N- to C-terminus: Shikimate dehydrogenase (NADP(+)) (295 aa).

Residues 18 to 20 and Thr66 each bind shikimate; that span reads SRS. The active-site Proton acceptor is the Lys70. Shikimate is bound by residues Asn91 and Asp106. Residues 130–134 and Met235 contribute to the NADP(+) site; that span reads GNGGA. Tyr237 is a shikimate binding site. Position 258 (Gly258) interacts with NADP(+).

This sequence belongs to the shikimate dehydrogenase family. As to quaternary structure, homodimer.

It catalyses the reaction shikimate + NADP(+) = 3-dehydroshikimate + NADPH + H(+). The protein operates within metabolic intermediate biosynthesis; chorismate biosynthesis; chorismate from D-erythrose 4-phosphate and phosphoenolpyruvate: step 4/7. Functionally, involved in the biosynthesis of the chorismate, which leads to the biosynthesis of aromatic amino acids. Catalyzes the reversible NADPH linked reduction of 3-dehydroshikimate (DHSA) to yield shikimate (SA). The sequence is that of Shikimate dehydrogenase (NADP(+)) from Chlorobium phaeobacteroides (strain DSM 266 / SMG 266 / 2430).